The following is a 388-amino-acid chain: Queuine tRNA-ribosyltransferase (388 aa).

Catalysis depends on aspartate 90, which acts as the Proton acceptor. Substrate contacts are provided by residues 90-94 (DSGGF), aspartate 144, glutamine 205, and glycine 232. Residues 263-269 (GVGTPED) are RNA binding. The active-site Nucleophile is aspartate 282. Residues 287–291 (TRNAR) form an RNA binding; important for wobble base 34 recognition region. Residues cysteine 320, cysteine 322, cysteine 325, and histidine 351 each coordinate Zn(2+).

It belongs to the queuine tRNA-ribosyltransferase family. In terms of assembly, homodimer. Within each dimer, one monomer is responsible for RNA recognition and catalysis, while the other monomer binds to the replacement base PreQ1. Zn(2+) is required as a cofactor.

The catalysed reaction is 7-aminomethyl-7-carbaguanine + guanosine(34) in tRNA = 7-aminomethyl-7-carbaguanosine(34) in tRNA + guanine. Its pathway is tRNA modification; tRNA-queuosine biosynthesis. In terms of biological role, catalyzes the base-exchange of a guanine (G) residue with the queuine precursor 7-aminomethyl-7-deazaguanine (PreQ1) at position 34 (anticodon wobble position) in tRNAs with GU(N) anticodons (tRNA-Asp, -Asn, -His and -Tyr). Catalysis occurs through a double-displacement mechanism. The nucleophile active site attacks the C1' of nucleotide 34 to detach the guanine base from the RNA, forming a covalent enzyme-RNA intermediate. The proton acceptor active site deprotonates the incoming PreQ1, allowing a nucleophilic attack on the C1' of the ribose to form the product. After dissociation, two additional enzymatic reactions on the tRNA convert PreQ1 to queuine (Q), resulting in the hypermodified nucleoside queuosine (7-(((4,5-cis-dihydroxy-2-cyclopenten-1-yl)amino)methyl)-7-deazaguanosine). This Campylobacter curvus (strain 525.92) protein is Queuine tRNA-ribosyltransferase.